Consider the following 515-residue polypeptide: Microtubule-associated protein 70-4 (515 aa).

Coiled-coil stretches lie at residues 26–106 (VVDE…ALSA) and 136–351 (LESD…NTSA). The tract at residues 208 to 410 (LLEKSNRQQV…KQPGSETEAA (203 aa)) is required for targeting to microtubules. A disordered region spans residues 340 to 515 (DDMRNESSNT…VKSTKDSCEI (176 aa)). A compositionally biased stretch (polar residues) spans 345–362 (ESSNTSASNKDNATSKQA). Over residues 364-374 (PKRSSSQPRRP) the composition is skewed to low complexity. Basic and acidic residues-rich tracts occupy residues 409 to 425 (AAEK…DSPR), 450 to 461 (KVADDAGKENKE), and 484 to 515 (SEHE…SCEI).

The protein belongs to the MAP70 family.

It localises to the cytoplasm. It is found in the cytoskeleton. Plant-specific protein that interact with microtubules. This is Microtubule-associated protein 70-4 (MAP70.4) from Oryza sativa subsp. japonica (Rice).